The chain runs to 66 residues: MPKLKTKSSAKKRFKVTASGRVMSAQSTKRHGMTKRSKRSLRTRRGIAQMSAPDARIVASFMPYSL.

Basic residues-rich tracts occupy residues 1-15 and 28-45; these read MPKL…KRFK and TKRH…RTRR. A disordered region spans residues 1–49; that stretch reads MPKLKTKSSAKKRFKVTASGRVMSAQSTKRHGMTKRSKRSLRTRRGIAQ.

This sequence belongs to the bacterial ribosomal protein bL35 family.

The polypeptide is Large ribosomal subunit protein bL35 (Anaplasma marginale (strain Florida)).